Consider the following 736-residue polypeptide: Orphan sodium- and chloride-dependent neurotransmitter transporter NTT5 (736 aa).

The Cytoplasmic segment spans residues methionine 1–glycine 138. The next 3 helical transmembrane spans lie at cysteine 139–leucine 159, isoleucine 177–glycine 197, and tyrosine 199–valine 219. Residues proline 220–serine 263 are Extracellular-facing. Residue asparagine 229 is glycosylated (N-linked (GlcNAc...) asparagine). Transmembrane regions (helical) follow at residues proline 264–isoleucine 284, threonine 290–isoleucine 310, valine 338–alanine 358, and leucine 383–isoleucine 403. Residues threonine 404–valine 495 are Extracellular-facing. 5 helical membrane passes run phenylalanine 496–isoleucine 516, histidine 534–threonine 554, tyrosine 568–alanine 588, isoleucine 609–methionine 629, and alanine 659–valine 679. The Cytoplasmic segment spans residues tyrosine 680–serine 736.

Belongs to the sodium:neurotransmitter symporter (SNF) (TC 2.A.22) family. SLC6A16 subfamily. Highly expressed in peripheral tissues, particularly in testis, pancreas, and prostate.

It is found in the membrane. In Homo sapiens (Human), this protein is Orphan sodium- and chloride-dependent neurotransmitter transporter NTT5 (SLC6A16).